A 288-amino-acid polypeptide reads, in one-letter code: Light-independent protochlorophyllide reductase iron-sulfur ATP-binding protein (288 aa).

ATP is bound by residues 10–15 (GIGKST) and lysine 39. Mg(2+) is bound at residue serine 14. [4Fe-4S] cluster is bound by residues cysteine 95 and cysteine 129. Residue 180–181 (NR) coordinates ATP.

This sequence belongs to the NifH/BchL/ChlL family. As to quaternary structure, homodimer. Protochlorophyllide reductase is composed of three subunits; ChlL, ChlN and ChlB. [4Fe-4S] cluster serves as cofactor.

It carries out the reaction chlorophyllide a + oxidized 2[4Fe-4S]-[ferredoxin] + 2 ADP + 2 phosphate = protochlorophyllide a + reduced 2[4Fe-4S]-[ferredoxin] + 2 ATP + 2 H2O. It functions in the pathway porphyrin-containing compound metabolism; chlorophyll biosynthesis (light-independent). In terms of biological role, component of the dark-operative protochlorophyllide reductase (DPOR) that uses Mg-ATP and reduced ferredoxin to reduce ring D of protochlorophyllide (Pchlide) to form chlorophyllide a (Chlide). This reaction is light-independent. The L component serves as a unique electron donor to the NB-component of the complex, and binds Mg-ATP. This chain is Light-independent protochlorophyllide reductase iron-sulfur ATP-binding protein, found in Trichodesmium erythraeum (strain IMS101).